A 138-amino-acid polypeptide reads, in one-letter code: Large ribosomal subunit protein bL17 (138 aa).

This sequence belongs to the bacterial ribosomal protein bL17 family. In terms of assembly, part of the 50S ribosomal subunit. Contacts protein L32.

The chain is Large ribosomal subunit protein bL17 from Granulibacter bethesdensis (strain ATCC BAA-1260 / CGDNIH1).